We begin with the raw amino-acid sequence, 883 residues long: Valine--tRNA ligase (883 aa).

The 'HIGH' region signature appears at 46–56 (PNVTGKLHLGH). The short motif at 520–524 (KMSKS) is the 'KMSKS' region element. Lys-523 provides a ligand contact to ATP. Residues 809-883 (LADLLNVEEE…RIDEMKKLVK (75 aa)) are a coiled coil.

The protein belongs to the class-I aminoacyl-tRNA synthetase family. ValS type 1 subfamily. Monomer.

The protein localises to the cytoplasm. It catalyses the reaction tRNA(Val) + L-valine + ATP = L-valyl-tRNA(Val) + AMP + diphosphate. Catalyzes the attachment of valine to tRNA(Val). As ValRS can inadvertently accommodate and process structurally similar amino acids such as threonine, to avoid such errors, it has a 'posttransfer' editing activity that hydrolyzes mischarged Thr-tRNA(Val) in a tRNA-dependent manner. This Streptococcus pneumoniae serotype 4 (strain ATCC BAA-334 / TIGR4) protein is Valine--tRNA ligase.